Here is a 290-residue protein sequence, read N- to C-terminus: Ribosomal RNA small subunit methyltransferase A (290 aa).

S-adenosyl-L-methionine contacts are provided by asparagine 27, leucine 29, glycine 54, glutamate 75, aspartate 100, and asparagine 125.

It belongs to the class I-like SAM-binding methyltransferase superfamily. rRNA adenine N(6)-methyltransferase family. RsmA subfamily.

Its subcellular location is the cytoplasm. It catalyses the reaction adenosine(1518)/adenosine(1519) in 16S rRNA + 4 S-adenosyl-L-methionine = N(6)-dimethyladenosine(1518)/N(6)-dimethyladenosine(1519) in 16S rRNA + 4 S-adenosyl-L-homocysteine + 4 H(+). Specifically dimethylates two adjacent adenosines (A1518 and A1519) in the loop of a conserved hairpin near the 3'-end of 16S rRNA in the 30S particle. May play a critical role in biogenesis of 30S subunits. In Streptococcus thermophilus (strain ATCC BAA-491 / LMD-9), this protein is Ribosomal RNA small subunit methyltransferase A.